The chain runs to 227 residues: Uracil-DNA glycosylase 2 (227 aa).

Asp67 functions as the Proton acceptor in the catalytic mechanism.

It belongs to the uracil-DNA glycosylase (UDG) superfamily. UNG family.

The protein resides in the cytoplasm. The enzyme catalyses Hydrolyzes single-stranded DNA or mismatched double-stranded DNA and polynucleotides, releasing free uracil.. In terms of biological role, excises uracil residues from the DNA which can arise as a result of misincorporation of dUMP residues by DNA polymerase or due to deamination of cytosine. The sequence is that of Uracil-DNA glycosylase 2 (ung2) from Streptomyces avermitilis (strain ATCC 31267 / DSM 46492 / JCM 5070 / NBRC 14893 / NCIMB 12804 / NRRL 8165 / MA-4680).